We begin with the raw amino-acid sequence, 565 residues long: Frizzled-2 (565 aa).

Positions 1 to 23 are cleaved as a signal peptide; that stretch reads MRPRSALPRLLLPLLLLPAAGPA. Topologically, residues 24-247 are extracellular; the sequence is QFHGEKGISI…QEETRFARLW (224 aa). The FZ domain maps to 34–153; it reads PDHGFCQPIS…HGAEQICVGQ (120 aa). 5 disulfide bridges follow: Cys-39–Cys-100, Cys-47–Cys-93, Cys-84–Cys-121, Cys-110–Cys-150, and Cys-114–Cys-138. N-linked (GlcNAc...) asparagine glycosylation is present at Asn-53. A glycan (N-linked (GlcNAc...) asparagine) is linked at Asn-154. Positions 160-189 are disordered; that stretch reads APALLTTAPPPGLQPGAGGTPGGPGGGGAP. Residues 174 to 188 are compositionally biased toward gly residues; it reads PGAGGTPGGPGGGGA. The chain crosses the membrane as a helical span at residues 248–268; that stretch reads ILTWSVLCCASTFFTVTTYLV. At 269–279 the chain is on the cytoplasmic side; that stretch reads DMQRFRYPERP. A helical membrane pass occupies residues 280 to 300; sequence IIFLSGCYTMVSVAYIAGFVL. Residues 301–327 are Extracellular-facing; the sequence is QERVVCNERFSEDGYRTVVQGTKKEGC. The helical transmembrane segment at 328–348 threads the bilayer; that stretch reads TILFMMLYFFSMASSIWWVIL. Over 349-370 the chain is Cytoplasmic; the sequence is SLTWFLAAGMKWGHEAIEANSQ. Residues 371–391 form a helical membrane-spanning segment; it reads YFHLAAWAVPAVKTITILAMG. Residues 392–414 lie on the Extracellular side of the membrane; sequence QIDGDLLSGVCFVGLNSLDPLRG. The chain crosses the membrane as a helical span at residues 415-435; it reads FVLAPLFVYLFIGTSFLLAGF. Topologically, residues 436 to 461 are cytoplasmic; sequence VSLFRIRTIMKHDGTKTEKLERLMVR. The chain crosses the membrane as a helical span at residues 462-482; sequence IGVFSVLYTVPATIVIACYFY. The Extracellular portion of the chain corresponds to 483–519; that stretch reads EQAFREHWERSWVSQHCKSLAIPCPAHYTPRMSPDFT. Residues 520–540 form a helical membrane-spanning segment; it reads VYMIKYLMTLIVGITSGFWIW. Residues 541–565 are Cytoplasmic-facing; sequence SGKTLHSWRKFYTRLTNSRHGETTV. The Lys-Thr-X-X-X-Trp motif, mediates interaction with the PDZ domain of Dvl family members signature appears at 543 to 548; that stretch reads KTLHSW. Residues 563 to 565 carry the PDZ-binding motif; that stretch reads TTV.

It belongs to the G-protein coupled receptor Fz/Smo family. (Microbial infection) Interacts with C.difficile toxin TcdB; frizzled receptors constitute the major host receptors for TcdB in the colonic epithelium. Post-translationally, ubiquitinated by ZNRF3, leading to its degradation by the proteasome. As to expression, widely expressed. In the adult, mainly found in heart, placenta, skeletal muscle, lung, kidney, pancreas, prostate, testis, ovary and colon. In the fetus, expressed in brain, lung and kidney. Low levels in fetal liver.

It is found in the membrane. Its subcellular location is the cell membrane. In terms of biological role, receptor for Wnt proteins. Most of frizzled receptors are coupled to the beta-catenin canonical signaling pathway, which leads to the activation of disheveled proteins, inhibition of GSK-3 kinase, nuclear accumulation of beta-catenin and activation of Wnt target genes. A second signaling pathway involving PKC and calcium fluxes has been seen for some family members, but it is not yet clear if it represents a distinct pathway or if it can be integrated in the canonical pathway, as PKC seems to be required for Wnt-mediated inactivation of GSK-3 kinase. Both pathways seem to involve interactions with G-proteins. May be involved in transduction and intercellular transmission of polarity information during tissue morphogenesis and/or in differentiated tissues. Functionally, (Microbial infection) Acts as a receptor for C.difficile toxin TcdB in the colonic epithelium. TcdB occupies the binding site for Wnt-adducted palmitoleate in frizzled receptors and TcdB-binding prevents Wnt-binding and downstream Wnt signaling. This Homo sapiens (Human) protein is Frizzled-2 (FZD2).